Here is a 2446-residue protein sequence, read N- to C-terminus: Transcription factor HIVEP2 (2446 aa).

The interval Met1–Ser93 is disordered. Residues Gly17–Gln28 show a composition bias toward basic and acidic residues. 2 C2H2-type zinc fingers span residues Tyr189–His211 and Tyr217–His239. 4 disordered regions span residues His272–Leu303, Glu340–Thr416, Ser543–Ser563, and Ser751–Arg985. 2 stretches are compositionally biased toward polar residues: residues Ser381–Thr416 and Ser543–Ile556. The segment covering Ser751–Pro760 has biased composition (basic and acidic residues). Over residues Gln766 to Ser777 the composition is skewed to polar residues. The span at Asp782 to Gly791 shows a compositional bias: basic and acidic residues. The segment covering Ser800–Asn812 has biased composition (polar residues). Ser819 is subject to Phosphoserine. The span at Pro863–Pro878 shows a compositional bias: low complexity. A compositionally biased stretch (basic and acidic residues) spans Arg892–Glu916. Residues Pro937–Arg943 carry the Nuclear localization signal motif. 5 positions are modified to phosphoserine: Ser950, Ser955, Ser1048, Ser1443, and Ser1447. The segment covering Gly952 to Ser982 has biased composition (low complexity). Residues Lys1485–Arg1603 form a disordered region. 2 stretches are compositionally biased toward low complexity: residues Ser1510–Ser1533 and Ser1576–Ser1586. 2 C2H2-type zinc fingers span residues Tyr1799 to His1821 and Tyr1827 to His1851. 2 disordered regions span residues Ala1882–Gly1951 and Glu2024–Leu2129. Residues Asp1899–Gly1925 are compositionally biased toward acidic residues. Residues Pro2029–Ser2053 show a composition bias toward low complexity. 10 repeat units span residues Ser2053–Arg2056, Ser2059–Arg2062, Ser2071–Arg2074, Ser2083–Arg2086, Ser2089–Lys2092, Ser2106–Arg2109, Ser2112–Arg2115, Ser2118–Lys2121, Ser2130–Arg2133, and Ser2145–Arg2148. Positions Ser2053 to Arg2148 are 10 X 4 AA tandem repeats of S-P-[RGMKC]-[RK]. Residues Pro2078 to Pro2107 show a composition bias toward basic and acidic residues. Residue Ser2118 is modified to Phosphoserine. 3 disordered regions span residues Pro2242–Asn2325, His2371–Pro2403, and His2423–His2446. Phosphoserine occurs at positions 2297 and 2301. Residues Lys2307–Ala2317 show a composition bias toward polar residues. The segment covering Pro2387 to Asn2396 has biased composition (basic and acidic residues). Phosphoserine occurs at positions 2429 and 2431. Residues Glu2433–His2446 show a composition bias toward basic and acidic residues.

Interacts with TCF4. As to expression, expressed in brain and skeletal muscle.

It localises to the nucleus. In terms of biological role, this protein specifically binds to the DNA sequence 5'-GGGACTTTCC-3' which is found in the enhancer elements of numerous viral promoters such as those of SV40, CMV, or HIV1. In addition, related sequences are found in the enhancer elements of a number of cellular promoters, including those of the class I MHC, interleukin-2 receptor, somatostatin receptor II, and interferon-beta genes. It may act in T-cell activation. In Homo sapiens (Human), this protein is Transcription factor HIVEP2 (HIVEP2).